A 685-amino-acid polypeptide reads, in one-letter code: Sulfate transporter 4.1, chloroplastic (685 aa).

The transit peptide at 1–23 directs the protein to the chloroplast; it reads MSYASLSVKDLTSLVSRSGTGSS. Positions 15–26 are enriched in low complexity; that stretch reads VSRSGTGSSSSL. Positions 15-53 are disordered; the sequence is VSRSGTGSSSSLKPPGQTRPVKVIPLQHPDTSNEARPPS. The next 12 membrane-spanning stretches (helical) occupy residues 97–117, 122–142, 147–167, 175–195, 203–223, 255–275, 283–303, 332–352, 369–389, 406–426, 434–454, and 473–493; these read LDLM…MSYA, LPPI…AIFG, LAIG…GGIA, IELA…MGLL, FISH…IGLS, WPPF…KHVG, FLRA…AKVF, TLLP…VGIA, LFGL…PATG, LSGL…TPMF, LAAI…AIFL, and LFFG…AFVI. In terms of domain architecture, STAS spans 518–642; the sequence is QYPEAYTYNG…VRVHDAVQVC (125 aa).

This sequence belongs to the SLC26A/SulP transporter (TC 2.A.53) family. In terms of tissue distribution, expressed both in roots and leaves.

Its subcellular location is the plastid. It localises to the chloroplast membrane. In terms of biological role, h(+)/sulfate cotransporter that may play a role in the regulation of sulfate assimilation. The protein is Sulfate transporter 4.1, chloroplastic (SULTR4;1) of Arabidopsis thaliana (Mouse-ear cress).